We begin with the raw amino-acid sequence, 116 residues long: Large ribosomal subunit protein bL20c (116 aa).

Belongs to the bacterial ribosomal protein bL20 family.

It is found in the plastid. The protein resides in the chloroplast. Its function is as follows. Binds directly to 23S ribosomal RNA and is necessary for the in vitro assembly process of the 50S ribosomal subunit. It is not involved in the protein synthesizing functions of that subunit. In Cryptomeria japonica (Japanese cedar), this protein is Large ribosomal subunit protein bL20c.